The chain runs to 644 residues: Magnetosome protein MamZ (644 aa).

The segment at 1 to 427 is major facilitator domain; the sequence is MPRNAEAPAK…YAAWLLANGI (427 aa). 18 consecutive transmembrane segments (helical) span residues 22-42, 63-83, 92-112, 113-133, 159-179, 185-205, 254-274, 281-301, 311-331, 337-357, 369-389, 403-423, 440-460, 478-498, 518-538, 553-573, 588-608, and 612-629; these read WNII…SISI, ADIQ…FGLL, IIAL…LSLQ, VGLA…VLLT, LMGN…AIVM, PGGV…GFQL, VIIL…LVGV, AHAA…VPLW, ISAI…LGMF, WLVA…FVTL, ILGA…VMLV, APFI…AWLL, TVDW…WLVG, VGFV…ISLA, IGLF…ALEW, PFIL…FTSA, LHSA…LAAN, and GEPY…WYRF. Residues 488–599 are ferric reductase-like domain; the sequence is WAFTFLIISL…SATYVINALV (112 aa).

It in the N-terminal section; belongs to the major facilitator superfamily.

It is found in the magnetosome membrane. Functionally, required for correct biomineralization of the magnetosome; probably converts and then transports some form of iron. It is partially functionally redundant with MamH. May function with MamX, MamY amd Mms6. The sequence is that of Magnetosome protein MamZ from Paramagnetospirillum magneticum (strain ATCC 700264 / AMB-1) (Magnetospirillum magneticum).